The following is a 251-amino-acid chain: Orcokinin peptides type A (251 aa).

A signal peptide spans 1 to 20 (MTAQMFTIALLLSLSAIAAA). 3 consecutive propeptides follow at residues 21 to 46 (GTIKTAPARTPSTQDDASFPPDGAPV), 225 to 231 (DYDVFPD), and 249 to 251 (NVE).

The protein belongs to the orcokinin family.

It localises to the secreted. Myotropic peptides that enhance both the frequency and amplitude of spontaneous hindgut contractions. The sequence is that of Orcokinin peptides type A from Procambarus clarkii (Red swamp crayfish).